Consider the following 132-residue polypeptide: Small ribosomal subunit protein uS8c (132 aa).

The protein belongs to the universal ribosomal protein uS8 family. As to quaternary structure, part of the 30S ribosomal subunit.

It is found in the plastid. It localises to the chloroplast. Functionally, one of the primary rRNA binding proteins, it binds directly to 16S rRNA central domain where it helps coordinate assembly of the platform of the 30S subunit. The protein is Small ribosomal subunit protein uS8c (rps8) of Liriodendron tulipifera (Tuliptree).